The primary structure comprises 279 residues: MGTPEFPDLGKHCSVDVCKQIDFLPFTCDRCLQVFCLDHRSYMKHSCPKGDREDVTVVICPLCAKGVRLNPNEDPNITWEKHVNTDCDPSNYEKATKKKKCPVPRCKEYLTFSNTIKCRDCNVDHCLKHRFGPDHTCPGPRKLPFMGFLSSSTTRKEAKTTRPNKAHPSTSSSSSSSRWSNLLSSAEAGISRLGNDISQKLQFSSSKDNGIVEVCPQCGAKFSSVTSLVEHVEKTHERNKKQNHGNVTVDVCPRCSRGFRDPVDLVNHIERDHRGTSKA.

AN1-type zinc fingers lie at residues 7–55 and 95–145; these read PDLG…REDV and ATKK…KLPF. C13, C18, C28, C31, C36, H39, H45, C47, C101, C106, C118, C121, C126, H129, H135, and C137 together coordinate Zn(2+). Residues 152–178 are disordered; that stretch reads STTRKEAKTTRPNKAHPSTSSSSSSSR. The span at 169–178 shows a compositional bias: low complexity; the sequence is STSSSSSSSR. 2 C2H2-type zinc fingers span residues 213–236 and 250–273; these read EVCPQCGAKFSSVTSLVEHVEKTH and DVCPRCSRGFRDPVDLVNHIERDH.

May be involved in environmental stress response. The polypeptide is Zinc finger AN1 and C2H2 domain-containing stress-associated protein 11 (SAP11) (Arabidopsis thaliana (Mouse-ear cress)).